The following is a 533-amino-acid chain: Quinate permease (533 aa).

Residues 1 to 21 (MSILALVEDRPTPREVYNWRV) are Cytoplasmic-facing. A helical membrane pass occupies residues 22–42 (YLLAAVASFTSCMIGYDSAFI). Topologically, residues 43–67 (GTTLSLQSFQNEFNWESLNTDLISA) are extracellular. The helical transmembrane segment at 68-88 (NIVSLYQAGAFFGALFAYPIG) threads the bilayer. Residues 89 to 94 (HFWGRR) are Cytoplasmic-facing. Residues 95 to 115 (WGLMFSALIFFLGAGMMLGAN) traverse the membrane as a helical segment. The Extracellular segment spans residues 116-127 (GDRGLGLIYGGR). Residues 128–148 (VLAGIGVGAGSNICPIYISEM) traverse the membrane as a helical segment. At 149–156 (APPAIRGR) the chain is on the cytoplasmic side. A helical membrane pass occupies residues 157-177 (LVGVYELGWQIGGVVGFWINY). At 178–191 (GVDETLAPSHKQWI) the chain is on the extracellular side. A helical transmembrane segment spans residues 192 to 212 (IPFAVQLIPAGLLIIGALLIR). Topologically, residues 213 to 282 (ESPRWLFLRG…AWTNKRILYR (70 aa)) are cytoplasmic. Residues 283 to 303 (LFLGSMLFLWQNGSGINAINY) form a helical membrane-spanning segment. Residues 304-324 (YSPRVFKSIGVSGGNTSLLTT) are Extracellular-facing. Residues 325–346 (GIFGVVKAVITFVWLLYLIDHF) traverse the membrane as a helical segment. At 347–349 (GRR) the chain is on the cytoplasmic side. A helical membrane pass occupies residues 350–370 (NLLLVGAAGGSVCLWIVGGYI). The Extracellular segment spans residues 371–385 (KIAKPENNPEGTQLD). Residues 386–406 (SGGIAAIFFFYLWTAFYTPSW) form a helical membrane-spanning segment. The Cytoplasmic portion of the chain corresponds to 407–431 (NGTPWVINSEMFDPTVRSLAQACAA). The chain crosses the membrane as a helical span at residues 432-452 (ASNWLWNFLISRFTPQMFTSM). The Extracellular portion of the chain corresponds to 453 to 454 (GY). Residues 455 to 475 (GVYFFFASLMILSIVFVFFLI) form a helical membrane-spanning segment. Residues 476-533 (PETKGVPLESMETLFDKKPVWHAHSQLIRELRENEEAFRADMGASGKGGVTKEYVEEA) are Cytoplasmic-facing.

The protein belongs to the major facilitator superfamily. Sugar transporter (TC 2.A.1.1) family. Interacts with creB. Post-translationally, ubiquitinated. Deubiquitinated by creB, probably to control its activity or amount.

It localises to the cell membrane. In terms of biological role, integral membrane transporter that imports quinic acid to be catabolized as a carbon source. This chain is Quinate permease (qutD), found in Emericella nidulans (strain FGSC A4 / ATCC 38163 / CBS 112.46 / NRRL 194 / M139) (Aspergillus nidulans).